The following is a 311-amino-acid chain: Lipoyl synthase (311 aa).

[4Fe-4S] cluster-binding residues include Cys-47, Cys-52, Cys-58, Cys-73, Cys-77, Cys-80, and Ser-286. The Radical SAM core domain maps to 59-276 (WSRHTATYLA…RSVGESLGLF (218 aa)).

The protein belongs to the radical SAM superfamily. Lipoyl synthase family. [4Fe-4S] cluster is required as a cofactor.

The protein localises to the cytoplasm. The enzyme catalyses [[Fe-S] cluster scaffold protein carrying a second [4Fe-4S](2+) cluster] + N(6)-octanoyl-L-lysyl-[protein] + 2 oxidized [2Fe-2S]-[ferredoxin] + 2 S-adenosyl-L-methionine + 4 H(+) = [[Fe-S] cluster scaffold protein] + N(6)-[(R)-dihydrolipoyl]-L-lysyl-[protein] + 4 Fe(3+) + 2 hydrogen sulfide + 2 5'-deoxyadenosine + 2 L-methionine + 2 reduced [2Fe-2S]-[ferredoxin]. Its pathway is protein modification; protein lipoylation via endogenous pathway; protein N(6)-(lipoyl)lysine from octanoyl-[acyl-carrier-protein]: step 2/2. In terms of biological role, catalyzes the radical-mediated insertion of two sulfur atoms into the C-6 and C-8 positions of the octanoyl moiety bound to the lipoyl domains of lipoate-dependent enzymes, thereby converting the octanoylated domains into lipoylated derivatives. The chain is Lipoyl synthase from Chlamydia trachomatis serovar A (strain ATCC VR-571B / DSM 19440 / HAR-13).